The primary structure comprises 411 residues: Carbohydrate sulfotransferase 1 (411 aa).

Position 1 (Met1) is a topological domain, cytoplasmic. Residues 2-23 (QCSWKAVLLLALASIAIQYTAI) form a helical; Signal-anchor for type II membrane protein membrane-spanning segment. Topologically, residues 24 to 411 (RTFTAKSFHT…VEERDFRPFL (388 aa)) are lumenal. A glycan (N-linked (GlcNAc...) asparagine) is linked at Asn56. Residue 69-75 (TRSGSSF) coordinates 3'-phosphoadenylyl sulfate. N-linked (GlcNAc...) asparagine glycans are attached at residues Asn145 and Asn189. Residue 234–242 (RDPRGILAS) participates in 3'-phosphoadenylyl sulfate binding. N-linked (GlcNAc...) asparagine glycosylation occurs at Asn334. A Cell attachment site motif is present at residues 337 to 339 (RGD).

Belongs to the sulfotransferase 1 family. Gal/GlcNAc/GalNAc subfamily.

It localises to the golgi apparatus membrane. The enzyme catalyses 3'-phosphoadenylyl sulfate + keratan = adenosine 3',5'-bisphosphate + keratan 6'-sulfate.. Its pathway is glycan metabolism. Sulfotransferase that utilizes 3'-phospho-5'-adenylyl sulfate (PAPS) as sulfonate donor to catalyze the transfer of sulfate to position 6 of internal galactose (Gal) residues of keratan. Cooperates with B4GALT4 and B3GNT7 glycosyltransferases and CHST6 sulfotransferase to construct and elongate disulfated disaccharide unit [-&gt;3(6-sulfoGalbeta)1-&gt;4(6-sulfoGlcNAcbeta)1-&gt;] within keratan sulfate polymer. Has a preference for sulfating keratan sulfate, but it also transfers sulfate to the unsulfated polymer. Involved in biosynthesis of phosphacan, a major keratan sulfate proteoglycan in the developing brain. Involved in biosynthesis of 6-sulfoGalbeta-containing O-linked glycans in high endothelial venules of lymph nodes. May act in a synergistic manner with CHST4 to generate sialyl 6',6-disulfo Lewis X motif, a recognition determinant for immune cell receptors implicated in leukocyte trafficking. Catalyzes sulfation of N-acetyllactosamine (LacNAc) oligosaccharides with highest efficiency for sialylated LacNAc structures. The chain is Carbohydrate sulfotransferase 1 (Chst1) from Rattus norvegicus (Rat).